A 223-amino-acid chain; its full sequence is Transmembrane protein 126 (223 aa).

Topologically, residues methionine 1–glutamate 39 are mitochondrial matrix. A helical membrane pass occupies residues valine 40 to asparagine 62. The Mitochondrial intermembrane segment spans residues asparagine 63–serine 78. A helical transmembrane segment spans residues threonine 79–isoleucine 99. The Mitochondrial matrix portion of the chain corresponds to glutamine 100–glutamine 123. A helical membrane pass occupies residues threonine 124 to threonine 144. The Mitochondrial intermembrane portion of the chain corresponds to arginine 145 to proline 171. Residues isoleucine 172–glycine 192 form a helical membrane-spanning segment. Over glutamine 193–phenylalanine 223 the chain is Mitochondrial matrix.

It belongs to the TMEM126 family. In terms of assembly, associates with mitochondrial complex I assembly intermediates during its biogenesis.

Its subcellular location is the mitochondrion membrane. In terms of biological role, as part of the MCIA complex, involved in the assembly of the mitochondrial complex I. The polypeptide is Transmembrane protein 126 (Drosophila melanogaster (Fruit fly)).